Reading from the N-terminus, the 86-residue chain is MTRFVLFLSCFFLIGMVVECKDGYLVGDDGCKMHCFTRPGHYCASECSRVKGKDGYCYAWLACYCYNMPNWAPIWNSATNRCRGRK.

An N-terminal signal peptide occupies residues 1-20 (MTRFVLFLSCFFLIGMVVEC). The region spanning 21 to 83 (KDGYLVGDDG…IWNSATNRCR (63 aa)) is the LCN-type CS-alpha/beta domain. Disulfide bonds link Cys-31/Cys-82, Cys-35/Cys-57, Cys-43/Cys-63, and Cys-47/Cys-65. The residue at position 83 (Arg-83) is an Arginine amide.

As to expression, expressed by the venom gland.

The protein resides in the secreted. Its function is as follows. Beta toxins bind voltage-independently at site-4 of sodium channels (Nav) and shift the voltage of activation toward more negative potentials thereby affecting sodium channel activation and promoting spontaneous and repetitive firing. The sequence is that of Toxin Td8 from Tityus discrepans (Venezuelan scorpion).